Consider the following 71-residue polypeptide: IRCFITPRVSSQACPDGHVCYTKTWCDNFCGINGKRVDLGCAATCPTVKPGVDIKCCSTDNCNPFPTRKRP.

Disulfide bonds link cysteine 3–cysteine 20, cysteine 14–cysteine 41, cysteine 26–cysteine 30, cysteine 45–cysteine 56, and cysteine 57–cysteine 62.

It belongs to the three-finger toxin family. Long-chain subfamily. Type II alpha-neurotoxin sub-subfamily. As to expression, expressed by the venom gland.

It is found in the secreted. Functionally, binds with high affinity to muscular (alpha-1/CHRNA1) and neuronal (alpha-7/CHRNA7) nicotinic acetylcholine receptor (nAChR) and hinders acetylcholine binding to the receptor, thereby impairing neuromuscular and neuronal transmission. This is Long neurotoxin 1 from Naja annulata annulata (Banded water cobra).